We begin with the raw amino-acid sequence, 245 residues long: tRNA pseudouridine synthase A (245 aa).

Catalysis depends on aspartate 52, which acts as the Nucleophile. Residue tyrosine 111 participates in substrate binding.

It belongs to the tRNA pseudouridine synthase TruA family. As to quaternary structure, homodimer.

It carries out the reaction uridine(38/39/40) in tRNA = pseudouridine(38/39/40) in tRNA. Formation of pseudouridine at positions 38, 39 and 40 in the anticodon stem and loop of transfer RNAs. The protein is tRNA pseudouridine synthase A of Thermotoga neapolitana (strain ATCC 49049 / DSM 4359 / NBRC 107923 / NS-E).